A 338-amino-acid chain; its full sequence is Nicotinate-nucleotide--dimethylbenzimidazole phosphoribosyltransferase (338 aa).

Glutamate 305 acts as the Proton acceptor in catalysis.

Belongs to the CobT family.

The catalysed reaction is 5,6-dimethylbenzimidazole + nicotinate beta-D-ribonucleotide = alpha-ribazole 5'-phosphate + nicotinate + H(+). It functions in the pathway nucleoside biosynthesis; alpha-ribazole biosynthesis; alpha-ribazole from 5,6-dimethylbenzimidazole: step 1/2. Catalyzes the synthesis of alpha-ribazole-5'-phosphate from nicotinate mononucleotide (NAMN) and 5,6-dimethylbenzimidazole (DMB). The sequence is that of Nicotinate-nucleotide--dimethylbenzimidazole phosphoribosyltransferase from Novosphingobium aromaticivorans (strain ATCC 700278 / DSM 12444 / CCUG 56034 / CIP 105152 / NBRC 16084 / F199).